The following is a 610-amino-acid chain: Elongation factor 4 (610 aa).

The tr-type G domain occupies 11-193 (ENIRNFSIIA…QIVEKVPAPS (183 aa)). Residues 23-28 (DHGKST) and 140-143 (NKID) each bind GTP.

Belongs to the TRAFAC class translation factor GTPase superfamily. Classic translation factor GTPase family. LepA subfamily.

It localises to the cell membrane. The catalysed reaction is GTP + H2O = GDP + phosphate + H(+). In terms of biological role, required for accurate and efficient protein synthesis under certain stress conditions. May act as a fidelity factor of the translation reaction, by catalyzing a one-codon backward translocation of tRNAs on improperly translocated ribosomes. Back-translocation proceeds from a post-translocation (POST) complex to a pre-translocation (PRE) complex, thus giving elongation factor G a second chance to translocate the tRNAs correctly. Binds to ribosomes in a GTP-dependent manner. The protein is Elongation factor 4 of Streptococcus equi subsp. zooepidemicus (strain H70).